A 1693-amino-acid chain; its full sequence is Non-structural polyprotein pORF1 (1693 aa).

The Alphavirus-like MT domain occupies 56 to 240; sequence VFRPEVFWNH…HDVSNLRSWI (185 aa). The interval 60–240 is methyltransferase; that stretch reads EVFWNHPIQR…HDVSNLRSWI (181 aa). The Y-domain stretch occupies residues 241 to 439; sequence RTTKVTGDHP…FYAQCRRWLS (199 aa). C434 and C481 are oxidised to a cystine. Residues 442 to 509 are protease; sequence FHLDPRVLVF…EAYEGSDVDP (68 aa). The interval 510 to 691 is zinc-binding; that stretch reads AESAISDISG…FSPGHVWESA (182 aa). Zn(2+) is bound by residues H671, E673, and H686. The disordered stretch occupies residues 712–771; sequence PSPAQPDLGFTSEPSIPSRAATPTPAAPLPPPAPDPSPTLSAPARGEPAPGATARAPAIT. Residues 712 to 778 form a hinge region; the sequence is PSPAQPDLGF…AITHQTARHR (67 aa). Positions 725-735 are enriched in low complexity; it reads PSIPSRAATPT. Positions 736-748 are enriched in pro residues; the sequence is PAAPLPPPAPDPS. In terms of domain architecture, Macro spans 775–921; it reads ARHRRLLFTY…LYLPELAARW (147 aa). The tract at residues 785–942 is X-domain; it reads PDGSKVFAGS…TITEDVARTA (158 aa). Positions 934 to 1082 constitute a (+)RNA virus helicase ATP-binding domain; the sequence is ITEDVARTAN…RPDLAPTSWW (149 aa). The segment at 960–1204 is NTPase/helicase; sequence GCRVTPGVVQ…ISDAIVNNFF (245 aa). An ATP-binding site is contributed by 975–982; sequence GVPGSGKS. A (+)RNA virus helicase C-terminal domain is found at 1083–1216; that stretch reads HVTHRCPADV…GGEIGHQRPS (134 aa). Residues 1207-1693 are RNA-directed RNA polymerase; that stretch reads GGEIGHQRPS…LTNSILCRVE (487 aa). The RdRp catalytic domain maps to 1454-1565; the sequence is SMVFENDFSE…LCSEYRQSPG (112 aa).

It belongs to the hepevirus non-structural polyprotein family. In terms of assembly, the protease domain interacts with host EIF2AK4 (via C-terminus); this interaction inhibits dimerization of EIF2AK4 and prevents EIF2AK4-mediated phosphorylation of host EIF2A. Mg(2+) is required as a cofactor. In terms of processing, ORF1 polyprotein does not seem to be processed into distinct enzymatic domains by a viral protease belonging to ORF1, but could be processed by a host serine protease like thrombin.

It localises to the host cytoplasm. The protein resides in the host perinuclear region. It carries out the reaction RNA(n) + a ribonucleoside 5'-triphosphate = RNA(n+1) + diphosphate. The enzyme catalyses GTP + S-adenosyl-L-methionine = N(7)-methyl-GTP + S-adenosyl-L-homocysteine. With respect to regulation, putative protease: Inhibited by chymostatin. In terms of biological role, methyltransferase: Displays a capping enzyme activity. This function is necessary since all viral RNAs are synthesized in the cytoplasm, and host capping enzymes are restricted to the nucleus. The enzymatic reaction involves a covalent link between 7-methyl-GMP and the methyltransferase, whereas eukaryotic capping enzymes form a covalent complex only with GMP. Methyltransferase catalyzes transfer of a methyl group from S-adenosylmethionine to GTP and GDP to yield m(7)GTP or m(7)GDP. GDP is a better substrate than GTP. This enzyme also displays guanylyltransferase activity to form a covalent complex, methyltransferase-m(7)GMP, from which 7-methyl-GMP is transferred to the mRNA to create the cap structure. Its function is as follows. Y-domain: Indispensable for virus replication. Functionally, putative protease: The putative protease domain although necessary for replication of the virus may not be a protease but rather a structural Zn(2+)-binding domain. Inhibits induction of IFN-beta by MDA5 and RIG-I pathways and down-regulates the expression of MDA5. NTPase/helicase: Multi-functional protein that exhibits NTPase and RNA unwinding activities. Hydrolyzes all NTPs efficiently and unwinds RNA duplexes containing 5' overhangs. Possesses a sequence independent RNA-5'-triphosphatase (RTPase) activity suggestive of its role in forming viral cap structure. Also participates in viral genome replication, RNA translocation and genome packaging/unpackaging. In terms of biological role, RNA-directed RNA polymerase: Plays an essential role in the virus replication. Binds to the 3'-end of the genomic RNA to initiate viral replication. The protein is Non-structural polyprotein pORF1 of Hepatitis E virus genotype 1 (isolate Human/Pakistan/Sar-55) (HEV-1).